A 205-amino-acid polypeptide reads, in one-letter code: Probable GTP-binding protein EngB (205 aa).

Residues 29–203 (QGAEIAFIGR…KAVLSQWFRS (175 aa)) form the EngB-type G domain. GTP contacts are provided by residues 37–44 (GRSNAGKS), 64–68 (GRTQM), 82–85 (DLPG), 149–152 (TKSD), and 182–184 (FSS). The Mg(2+) site is built by S44 and T66.

It belongs to the TRAFAC class TrmE-Era-EngA-EngB-Septin-like GTPase superfamily. EngB GTPase family. Requires Mg(2+) as cofactor.

Its function is as follows. Necessary for normal cell division and for the maintenance of normal septation. In Coxiella burnetii (strain CbuG_Q212) (Coxiella burnetii (strain Q212)), this protein is Probable GTP-binding protein EngB.